We begin with the raw amino-acid sequence, 381 residues long: Molybdenum import ATP-binding protein ModC (381 aa).

Residues 5–238 (SRSIQAQFRG…PALPLAASRD (234 aa)) enclose the ABC transporter domain. An ATP-binding site is contributed by 37-44 (GPSGCGKS). Residues 297–367 (NTSILNVLPA…VKGVALAPGR (71 aa)) enclose the Mop domain.

The protein belongs to the ABC transporter superfamily. Molybdate importer (TC 3.A.1.8) family. In terms of assembly, the complex is composed of two ATP-binding proteins (ModC), two transmembrane proteins (ModB) and a solute-binding protein (ModA).

The protein localises to the cell inner membrane. It carries out the reaction molybdate(out) + ATP + H2O = molybdate(in) + ADP + phosphate + H(+). Its function is as follows. Part of the ABC transporter complex ModABC involved in molybdenum import. Responsible for energy coupling to the transport system. The polypeptide is Molybdenum import ATP-binding protein ModC (Rhodopseudomonas palustris (strain BisB18)).